The primary structure comprises 468 residues: Eukaryotic translation initiation factor 3 subunit M (468 aa).

The tract at residues 42-61 is disordered; the sequence is PLIEPLRQQEQSEEEPDRKQ. Residues 206-377 form the PCI domain; the sequence is DLELAQTHVV…SEFLVHRATY (172 aa). A disordered region spans residues 418 to 468; that stretch reads MQAAAEETGQGKSGDKGAKGGDRRRNPQQQQQSQPSQPQQAREVELVGGAE. The segment covering 430–442 has biased composition (basic and acidic residues); sequence SGDKGAKGGDRRR. Low complexity predominate over residues 444–457; sequence PQQQQQSQPSQPQQ.

This sequence belongs to the eIF-3 subunit M family. Component of the eukaryotic translation initiation factor 3 (eIF-3) complex.

The protein localises to the cytoplasm. Its function is as follows. Component of the eukaryotic translation initiation factor 3 (eIF-3) complex, which is involved in protein synthesis of a specialized repertoire of mRNAs and, together with other initiation factors, stimulates binding of mRNA and methionyl-tRNAi to the 40S ribosome. The eIF-3 complex specifically targets and initiates translation of a subset of mRNAs involved in cell proliferation. The polypeptide is Eukaryotic translation initiation factor 3 subunit M (Neosartorya fischeri (strain ATCC 1020 / DSM 3700 / CBS 544.65 / FGSC A1164 / JCM 1740 / NRRL 181 / WB 181) (Aspergillus fischerianus)).